A 79-amino-acid polypeptide reads, in one-letter code: Pigment-dispersing hormone type 1 (79 aa).

Residues 1 to 22 form the signal peptide; sequence MRSAVVVALLVMVAMSLQLTAA. Ala76 bears the Alanine amide mark.

This sequence belongs to the arthropod PDH family. Eyestalk.

It is found in the secreted. The pigment-dispersing hormone causes the migration of the distal retinal pigment into the proximal end of the pigment chromatophore cells and thus decreases the amount of light entering the retinulas. May also function as a neurotransmitter and/or neuromodulator. This Penaeus vannamei (Whiteleg shrimp) protein is Pigment-dispersing hormone type 1 (PDH1).